A 640-amino-acid polypeptide reads, in one-letter code: Leucine-rich repeat-containing protein 4C (640 aa).

A signal peptide spans 1–44; it reads MLNKMTLHPQQIMIGPRFNRALFDPLLVVLLALQLLVVAGLVRA. Positions 45-76 constitute an LRRNT domain; sequence QTCPSVCSCSNQFSKVICVRKNLREVPDGIST. LRR repeat units follow at residues 77-98, 101-122, 125-146, 149-170, 173-195, 198-219, 220-241, 244-265, and 268-289; these read NTRL…SFKH, HLEI…AFNG, NLNT…AFVY, KLKE…AFNR, SLRR…AFEG, NLRY…TPLI, KLDE…SFQG, HLQK…AFDN, and SLVE…LFTP. Positions 301 to 353 constitute an LRRCT domain; that stretch reads NPWNCNCDILWLSWWIKDMAPSNTACCARCNTPPNLKGRYIGELDQNYFTCYA. In terms of domain architecture, Ig-like C2-type spans 354–442; that stretch reads PVIVEPPADL…GNTTASATLN (89 aa). A disulfide bridge links C375 with C426. Residues 463–483 are disordered; sequence EPSQDEARTTDNNVGPTPVVD. Residues 528-548 form a helical membrane-spanning segment; it reads IIIGCFVAITLMAAVMLVIFY. S631 carries the phosphoserine modification.

Interacts with NTNG1 and WHRN. In terms of tissue distribution, highly expressed in the cerebral cortex, including frontal, parietal and occipital lobes. Putamen, amygdala, hippocampus and medulla oblongata show moderate expression. Caudate nucleus and thalamus express small amounts, whereas other brain regions show very weak or no expression.

It localises to the postsynaptic cell membrane. In terms of biological role, may promote neurite outgrowth of developing thalamic neurons. The polypeptide is Leucine-rich repeat-containing protein 4C (LRRC4C) (Homo sapiens (Human)).